Here is an 881-residue protein sequence, read N- to C-terminus: DNA mismatch repair protein MutS (881 aa).

Residue 626–633 (GPNMAGKS) coordinates ATP.

The protein belongs to the DNA mismatch repair MutS family.

Functionally, this protein is involved in the repair of mismatches in DNA. It is possible that it carries out the mismatch recognition step. This protein has a weak ATPase activity. The sequence is that of DNA mismatch repair protein MutS from Desulfosudis oleivorans (strain DSM 6200 / JCM 39069 / Hxd3) (Desulfococcus oleovorans).